Reading from the N-terminus, the 214-residue chain is Adenylate kinase (214 aa).

Residue 10–15 participates in ATP binding; the sequence is GAGKGT. Residues 30-59 form an NMP region; the sequence is STGDMLRAAVKAGTPLGLEAKKVMDAGQLV. AMP is bound by residues Thr31, Arg36, 57–59, 85–88, and Gln92; these read QLV and GFPR. Residues 122–159 form an LID region; the sequence is GRRVHPGSGRVYHIVFNQPKVEGKDDVTGEDLAIRPDD. ATP-binding positions include Arg123 and 132-133; that span reads VY. Positions 156 and 167 each coordinate AMP. Gln200 lines the ATP pocket.

It belongs to the adenylate kinase family. In terms of assembly, monomer.

The protein localises to the cytoplasm. The catalysed reaction is AMP + ATP = 2 ADP. Its pathway is purine metabolism; AMP biosynthesis via salvage pathway; AMP from ADP: step 1/1. Catalyzes the reversible transfer of the terminal phosphate group between ATP and AMP. Plays an important role in cellular energy homeostasis and in adenine nucleotide metabolism. This chain is Adenylate kinase, found in Shewanella woodyi (strain ATCC 51908 / MS32).